The chain runs to 111 residues: Probable 4-amino-4-deoxy-L-arabinose-phosphoundecaprenol flippase subunit ArnE (111 aa).

3 helical membrane passes run 38–58 (LWLG…LLVL), 61–81 (LPVG…TLAA), and 91–111 (PRHW…GSAA). The EamA domain occupies 40–109 (LGLALICMGA…IISGIIILGS (70 aa)).

Belongs to the ArnE family. In terms of assembly, heterodimer of ArnE and ArnF.

The protein resides in the cell inner membrane. Its pathway is bacterial outer membrane biogenesis; lipopolysaccharide biosynthesis. Functionally, translocates 4-amino-4-deoxy-L-arabinose-phosphoundecaprenol (alpha-L-Ara4N-phosphoundecaprenol) from the cytoplasmic to the periplasmic side of the inner membrane. In Salmonella paratyphi B (strain ATCC BAA-1250 / SPB7), this protein is Probable 4-amino-4-deoxy-L-arabinose-phosphoundecaprenol flippase subunit ArnE.